The primary structure comprises 176 residues: MSSKQEPVVLGKIGSSHGIKGWLKITTYTESVEGIFDYSPWLIKEQGEWREVKVTQWRFQGKAVVASLEGVETRDQAQMLTNCEIAVSAEQMQELPEDEFYWRDLIGCEVTNTKGYNMGKVQEIVETGSNDVLLVKANAKDGFGKAERMIPFVTEQFVLEVNLTEKQILVDWDPDF.

The region spanning 96 to 176 (PEDEFYWRDL…QILVDWDPDF (81 aa)) is the PRC barrel domain.

The protein belongs to the RimM family. Binds ribosomal protein uS19.

The protein resides in the cytoplasm. An accessory protein needed during the final step in the assembly of 30S ribosomal subunit, possibly for assembly of the head region. Essential for efficient processing of 16S rRNA. May be needed both before and after RbfA during the maturation of 16S rRNA. It has affinity for free ribosomal 30S subunits but not for 70S ribosomes. The protein is Ribosome maturation factor RimM of Shewanella woodyi (strain ATCC 51908 / MS32).